Consider the following 90-residue polypeptide: DNA-binding protein HU-beta (90 aa).

The protein belongs to the bacterial histone-like protein family. As to quaternary structure, heterodimer of an alpha and a beta chain.

Histone-like DNA-binding protein which is capable of wrapping DNA to stabilize it, and thus to prevent its denaturation under extreme environmental conditions. In Pseudomonas fluorescens (strain ATCC BAA-477 / NRRL B-23932 / Pf-5), this protein is DNA-binding protein HU-beta (hupB).